A 608-amino-acid chain; its full sequence is Chaperone protein HtpG (608 aa).

The a; substrate-binding stretch occupies residues 1-332; it reads MQFQTEVNQL…VEDLPLNVSR (332 aa). The b stretch occupies residues 333–536; that stretch reads EILQENQILK…KNKPDFAMQQ (204 aa). The c stretch occupies residues 537-608; the sequence is LLKQMGQEQN…LTKIINKAFS (72 aa).

Belongs to the heat shock protein 90 family. Homodimer.

Its subcellular location is the cytoplasm. Functionally, molecular chaperone. Has ATPase activity. This Campylobacter jejuni (strain RM1221) protein is Chaperone protein HtpG.